A 191-amino-acid polypeptide reads, in one-letter code: MEAKAGPTAATDGAYSVSAEETEKWMEQAMQMAKDALDNTEVPVGCLMVYNNEVVGKGRNEVNQTKNATRHAEMVAIDQALDWCRRRGRSPSEVFEHTVLYVTVEPCIMCAAALRLMRIPLVVYGCQNERFGGCGSVLDIASADLPSTGKPFQCTPGYRAEEAVEMLKTFYKQENPNAPKSKVRKKECHKS.

The region spanning 20–145 is the CMP/dCMP-type deaminase domain; sequence EETEKWMEQA…SVLDIASADL (126 aa). H71 lines the Zn(2+) pocket. The active-site Proton donor is E73. Zn(2+)-binding residues include C107 and C110.

Belongs to the cytidine and deoxycytidylate deaminase family. ADAT2 subfamily. Zn(2+) serves as cofactor.

The catalysed reaction is adenosine(34) in tRNA + H2O + H(+) = inosine(34) in tRNA + NH4(+). Its function is as follows. Probably participates in deamination of adenosine-34 to inosine in many tRNAs. The protein is tRNA-specific adenosine deaminase 2 (DEADC1) of Bos taurus (Bovine).